A 254-amino-acid polypeptide reads, in one-letter code: MRQLINHIVNHDLFRWSVVTAMIFYRYSETCMEVTVRVGDPVTLGSGHGYHPGQKVHWYNQSCVGIGNGENTHPICTYDPPKPGRQKTMKTTPLPSPLLYECHNSTLSILHVNVSDPRNYCRRKCPPKGNCEFPTCFTLSLISRTTTRKPEQKTTLLRLKTTPNKHTQHKRSTRRTSPKDYNVTGLPKGFADSFTGNVEAHRTKDAAHSAWILIIIIIIIVVILFFFKIPQRLREKWDTKGYLYKGTDGLPTTD.

The interval 163–182 (PNKHTQHKRSTRRTSPKDYN) is disordered. The segment covering 166-176 (HTQHKRSTRRT) has biased composition (basic residues). The helical transmembrane segment at 207–227 (AHSAWILIIIIIIIVVILFFF) threads the bilayer.

Belongs to the RL11 family.

The protein localises to the host membrane. This is an uncharacterized protein from Human cytomegalovirus (strain Merlin) (HHV-5).